A 324-amino-acid polypeptide reads, in one-letter code: Coproporphyrin III ferrochelatase (324 aa).

Positions 184 and 266 each coordinate Fe(2+).

Belongs to the ferrochelatase family.

The protein localises to the cytoplasm. The catalysed reaction is Fe-coproporphyrin III + 2 H(+) = coproporphyrin III + Fe(2+). Its pathway is porphyrin-containing compound metabolism; protoheme biosynthesis. Its function is as follows. Involved in coproporphyrin-dependent heme b biosynthesis. Catalyzes the insertion of ferrous iron into coproporphyrin III to form Fe-coproporphyrin III. The polypeptide is Coproporphyrin III ferrochelatase (Lactiplantibacillus plantarum (strain ATCC BAA-793 / NCIMB 8826 / WCFS1) (Lactobacillus plantarum)).